The following is a 223-amino-acid chain: Peptidyl-tRNA hydrolase (223 aa).

Residue Tyr-16 participates in tRNA binding. His-21 serves as the catalytic Proton acceptor. TRNA contacts are provided by Phe-67, Asn-69, and Asn-113.

This sequence belongs to the PTH family. In terms of assembly, monomer.

It is found in the cytoplasm. The enzyme catalyses an N-acyl-L-alpha-aminoacyl-tRNA + H2O = an N-acyl-L-amino acid + a tRNA + H(+). In terms of biological role, hydrolyzes ribosome-free peptidyl-tRNAs (with 1 or more amino acids incorporated), which drop off the ribosome during protein synthesis, or as a result of ribosome stalling. Catalyzes the release of premature peptidyl moieties from peptidyl-tRNA molecules trapped in stalled 50S ribosomal subunits, and thus maintains levels of free tRNAs and 50S ribosomes. The sequence is that of Peptidyl-tRNA hydrolase from Helicobacter hepaticus (strain ATCC 51449 / 3B1).